The sequence spans 430 residues: Serine hydroxymethyltransferase 1 (430 aa).

(6S)-5,6,7,8-tetrahydrofolate is bound by residues leucine 132 and 136–138; that span reads GHL. Lysine 241 carries the N6-(pyridoxal phosphate)lysine modification.

Belongs to the SHMT family. As to quaternary structure, homodimer. It depends on pyridoxal 5'-phosphate as a cofactor.

The protein resides in the cytoplasm. It carries out the reaction (6R)-5,10-methylene-5,6,7,8-tetrahydrofolate + glycine + H2O = (6S)-5,6,7,8-tetrahydrofolate + L-serine. It participates in one-carbon metabolism; tetrahydrofolate interconversion. It functions in the pathway amino-acid biosynthesis; glycine biosynthesis; glycine from L-serine: step 1/1. Catalyzes the reversible interconversion of serine and glycine with tetrahydrofolate (THF) serving as the one-carbon carrier. This reaction serves as the major source of one-carbon groups required for the biosynthesis of purines, thymidylate, methionine, and other important biomolecules. Also exhibits THF-independent aldolase activity toward beta-hydroxyamino acids, producing glycine and aldehydes, via a retro-aldol mechanism. This chain is Serine hydroxymethyltransferase 1, found in Bordetella parapertussis (strain 12822 / ATCC BAA-587 / NCTC 13253).